We begin with the raw amino-acid sequence, 140 residues long: MTIIRKYHIAIAWTIATSAMLISLIFSEWMKLPPCDLCWYQRMAMYPLVLILGIGMYRKDSNVSIYAFPFACIGLIISVYQITIQAFPTSEMKICSVGVSCTENYLNLFGFISIPMLSFVGFLAIIILLYINQIKRQKNK.

The chain crosses the membrane as a helical span at residues 6-25 (KYHIAIAWTIATSAMLISLI). Cysteine 35 and cysteine 38 form a disulfide bridge. Helical transmembrane passes span 40 to 59 (YQRM…MYRK) and 66 to 83 (YAFP…YQIT). Cysteine 95 and cysteine 101 form a disulfide bridge. Residues 110 to 134 (GFISIPMLSFVGFLAIIILLYINQI) form a helical membrane-spanning segment.

It belongs to the DsbB family. BdbC subfamily.

It is found in the cell membrane. In terms of biological role, required for disulfide bond formation in some proteins. This chain is Probable disulfide formation protein C 2 (bdbC2), found in Bacillus anthracis.